Consider the following 336-residue polypeptide: UDP-3-O-acylglucosamine N-acyltransferase (336 aa).

The active-site Proton acceptor is the histidine 233.

The protein belongs to the transferase hexapeptide repeat family. LpxD subfamily. Homotrimer.

The enzyme catalyses a UDP-3-O-[(3R)-3-hydroxyacyl]-alpha-D-glucosamine + a (3R)-hydroxyacyl-[ACP] = a UDP-2-N,3-O-bis[(3R)-3-hydroxyacyl]-alpha-D-glucosamine + holo-[ACP] + H(+). Its pathway is bacterial outer membrane biogenesis; LPS lipid A biosynthesis. Its function is as follows. Catalyzes the N-acylation of UDP-3-O-acylglucosamine using 3-hydroxyacyl-ACP as the acyl donor. Is involved in the biosynthesis of lipid A, a phosphorylated glycolipid that anchors the lipopolysaccharide to the outer membrane of the cell. This chain is UDP-3-O-acylglucosamine N-acyltransferase, found in Helicobacter pylori (strain J99 / ATCC 700824) (Campylobacter pylori J99).